A 146-amino-acid chain; its full sequence is ATP synthase epsilon chain (146 aa).

Basic and acidic residues predominate over residues 92–116 (ISVDQARRDRDSLRKKLNEHERSEQ). A disordered region spans residues 92-120 (ISVDQARRDRDSLRKKLNEHERSEQDPEV).

It belongs to the ATPase epsilon chain family. As to quaternary structure, F-type ATPases have 2 components, CF(1) - the catalytic core - and CF(0) - the membrane proton channel. CF(1) has five subunits: alpha(3), beta(3), gamma(1), delta(1), epsilon(1). CF(0) has three main subunits: a, b and c.

Its subcellular location is the cell membrane. In terms of biological role, produces ATP from ADP in the presence of a proton gradient across the membrane. The protein is ATP synthase epsilon chain of Cutibacterium acnes (strain DSM 16379 / KPA171202) (Propionibacterium acnes).